The primary structure comprises 449 residues: Glutamyl-tRNA reductase (449 aa).

Residues 58–61 (TCNR), serine 121, 126–128 (ETQ), and glutamine 132 each bind substrate. The Nucleophile role is filled by cysteine 59. 203–208 (GLGEMA) contributes to the NADP(+) binding site.

It belongs to the glutamyl-tRNA reductase family. Homodimer.

The catalysed reaction is (S)-4-amino-5-oxopentanoate + tRNA(Glu) + NADP(+) = L-glutamyl-tRNA(Glu) + NADPH + H(+). It participates in porphyrin-containing compound metabolism; protoporphyrin-IX biosynthesis; 5-aminolevulinate from L-glutamyl-tRNA(Glu): step 1/2. Its function is as follows. Catalyzes the NADPH-dependent reduction of glutamyl-tRNA(Glu) to glutamate 1-semialdehyde (GSA). This Helicobacter pylori (strain ATCC 700392 / 26695) (Campylobacter pylori) protein is Glutamyl-tRNA reductase.